The primary structure comprises 348 residues: D-alanine--D-alanine ligase (348 aa).

The ATP-grasp domain occupies 132–334 (KRILEVAGVP…YSDLIKELVV (203 aa)). 162-217 (LEKLTFPVFVKPANMGSSVGISKAENESELRSAIDLALKYDSRILIEQGVVAREIE) provides a ligand contact to ATP. Positions 288, 301, and 303 each coordinate Mg(2+).

Belongs to the D-alanine--D-alanine ligase family. Mg(2+) is required as a cofactor. It depends on Mn(2+) as a cofactor.

It localises to the cytoplasm. It carries out the reaction 2 D-alanine + ATP = D-alanyl-D-alanine + ADP + phosphate + H(+). Its pathway is cell wall biogenesis; peptidoglycan biosynthesis. Functionally, cell wall formation. The chain is D-alanine--D-alanine ligase from Streptococcus thermophilus (strain ATCC BAA-491 / LMD-9).